The following is a 443-amino-acid chain: Phosphoglucosamine mutase (443 aa).

The Phosphoserine intermediate role is filled by S101. Positions 101, 239, 241, and 243 each coordinate Mg(2+). S101 is subject to Phosphoserine.

Belongs to the phosphohexose mutase family. Mg(2+) is required as a cofactor. Activated by phosphorylation.

It catalyses the reaction alpha-D-glucosamine 1-phosphate = D-glucosamine 6-phosphate. In terms of biological role, catalyzes the conversion of glucosamine-6-phosphate to glucosamine-1-phosphate. In Francisella tularensis subsp. tularensis (strain WY96-3418), this protein is Phosphoglucosamine mutase.